The chain runs to 692 residues: UvrABC system protein B (692 aa).

One can recognise a Helicase ATP-binding domain in the interval 32–187 (ENIENGEKAQ…LLNDLVGIQF (156 aa)). 45 to 52 (GATGTGKT) lines the ATP pocket. The short motif at 98 to 121 (YYDYYQPEAYVPSSDTYIEKDSSV) is the Beta-hairpin element. One can recognise a Helicase C-terminal domain in the interval 436-631 (QIDDLVGEIH…TIKKEIRDLI (196 aa)). Positions 656–691 (KALVKKLEKEMQQAAAALDFEGAAQLRDMVLELRAM) constitute a UVR domain.

This sequence belongs to the UvrB family. Forms a heterotetramer with UvrA during the search for lesions. Interacts with UvrC in an incision complex.

The protein localises to the cytoplasm. The UvrABC repair system catalyzes the recognition and processing of DNA lesions. A damage recognition complex composed of 2 UvrA and 2 UvrB subunits scans DNA for abnormalities. Upon binding of the UvrA(2)B(2) complex to a putative damaged site, the DNA wraps around one UvrB monomer. DNA wrap is dependent on ATP binding by UvrB and probably causes local melting of the DNA helix, facilitating insertion of UvrB beta-hairpin between the DNA strands. Then UvrB probes one DNA strand for the presence of a lesion. If a lesion is found the UvrA subunits dissociate and the UvrB-DNA preincision complex is formed. This complex is subsequently bound by UvrC and the second UvrB is released. If no lesion is found, the DNA wraps around the other UvrB subunit that will check the other stand for damage. In Lactococcus lactis subsp. cremoris (strain SK11), this protein is UvrABC system protein B.